Consider the following 912-residue polypeptide: Ubiquitin carboxyl-terminal hydrolase 20 (912 aa).

The segment at 6 to 111 adopts a UBP-type zinc-finger fold; that stretch reads DLCPHLDSIG…GPAPKFSEQD (106 aa). Residues Cys-8, His-10, Cys-30, Cys-33, Cys-43, Cys-48, Cys-53, His-60, His-64, His-70, Cys-83, and Cys-86 each coordinate Zn(2+). Positions 101 to 120 are disordered; that stretch reads PGPAPKFSEQDSPPPSHPLK. 3 positions are modified to phosphoserine: Ser-112, Ser-132, and Ser-134. The region spanning 145–683 is the USP domain; it reads TGMKNLGNSC…EAYVLFYRKS (539 aa). Cys-154 (nucleophile) is an active-site residue. Disordered regions lie at residues 258-308 and 322-415; these read LTEA…GSQA and ISEK…ASPV. Position 259 is a phosphothreonine (Thr-259). Residues 260–280 are compositionally biased toward basic and acidic residues; it reads EARDSDSSDTDEKREGDRSPS. Residue Ser-306 is modified to Phosphoserine. Positions 322–333 are enriched in basic and acidic residues; that stretch reads ISEKERMKDRKF. Phosphoserine is present on Ser-369. Position 378 is a phosphothreonine (Thr-378). Ser-408 and Ser-413 each carry phosphoserine. His-641 functions as the Proton acceptor in the catalytic mechanism. DUSP domains follow at residues 685-778 and 787-890; these read EEAV…LYVC and ALAK…RQSV.

It belongs to the peptidase C19 family. USP20/USP33 subfamily. In terms of assembly, interacts with VHL, leading to its ubiquitination and subsequent degradation. Interacts with CCP110. Interacts with DIO2. Interacts with HIF1A. Interacts with ADRB2. Interacts with USP18. Post-translationally, ubiquitinated via a VHL-dependent pathway for proteasomal degradation.

It is found in the cytoplasm. It localises to the endoplasmic reticulum. The protein resides in the perinuclear region. Its subcellular location is the cytoskeleton. The protein localises to the microtubule organizing center. It is found in the centrosome. It carries out the reaction Thiol-dependent hydrolysis of ester, thioester, amide, peptide and isopeptide bonds formed by the C-terminal Gly of ubiquitin (a 76-residue protein attached to proteins as an intracellular targeting signal).. Deubiquitinating enzyme that plays a role in many cellular processes including autophagy, cellular antiviral response or membrane protein biogenesis. Attenuates TLR4-mediated NF-kappa-B signaling by cooperating with beta-arrestin-2/ARRB2 and inhibiting TRAF6 autoubiquitination. Promotes cellular antiviral responses by deconjugating 'Lys-33' and 'Lys-48'-linked ubiquitination of STING1 leading to its stabilization. Plays an essential role in autophagy induction by regulating the ULK1 stability through deubiquitination of ULK1. Acts as a positive regulator for NF-kappa-B activation by TNF-alpha through deubiquitinating 'Lys-48'-linked polyubiquitination of SQSTM1, leading to its increased stability. Acts as a regulator of G-protein coupled receptor (GPCR) signaling by mediating the deubiquitination beta-2 adrenergic receptor (ADRB2). Plays a central role in ADRB2 recycling and resensitization after prolonged agonist stimulation by constitutively binding ADRB2, mediating deubiquitination of ADRB2 and inhibiting lysosomal trafficking of ADRB2. Upon dissociation, it is probably transferred to the translocated beta-arrestins, possibly leading to beta-arrestins deubiquitination and disengagement from ADRB2. This suggests the existence of a dynamic exchange between the ADRB2 and beta-arrestins. Deubiquitinates DIO2, thereby regulating thyroid hormone regulation. Deubiquitinates HIF1A, leading to stabilize HIF1A and enhance HIF1A-mediated activity. Deubiquitinates MCL1, a pivotal member of the anti-apoptotic Bcl-2 protein family to regulate its stability. Within the endoplasmic reticulum, participates with USP33 in the rescue of post-translationally targeted membrane proteins that are inappropriately ubiquitinated by the cytosolic protein quality control in the cytosol. In Bos taurus (Bovine), this protein is Ubiquitin carboxyl-terminal hydrolase 20 (USP20).